We begin with the raw amino-acid sequence, 358 residues long: MVDSLQKPELEELRPGIKAPAKETILTPRFYTTDFEAMAKMDLSPNEDELRAILEEFRADYNRKHFVRTPEFDGSAADMDPETKKVFVEFLEQSCTSEFSGFLLYKELSRRIKNRNPLLAECFELMARDEARHAGFLNKSMSDFDLQLDLGFLTANKKYTYFKPAYIFYATYLSEKIGYWRYITIFRHLEQHPEYRIYPIFKFFENWCQDENRHGDFFDALMKAQPSTVRGFVAKLWCRFFLLAVFATMYIRDVQRKEFYEALGLDAREYDRHVIAKTNETSARVFPVVLDVDHPKFYDRLETCIANNNQLAAIEATSAPKPVKVLRKLPYYLSNGLQLLKLYLVKPLESDVYQPAVR.

Belongs to the AcsF family. It depends on Fe cation as a cofactor.

The enzyme catalyses Mg-protoporphyrin IX 13-monomethyl ester + 3 NADPH + 3 O2 + 2 H(+) = 3,8-divinyl protochlorophyllide a + 3 NADP(+) + 5 H2O. Its pathway is porphyrin-containing compound metabolism; chlorophyll biosynthesis (light-independent). Catalyzes the formation of the isocyclic ring in chlorophyll biosynthesis. Mediates the cyclase reaction, which results in the formation of divinylprotochlorophyllide (Pchlide) characteristic of all chlorophylls from magnesium-protoporphyrin IX 13-monomethyl ester (MgPMME). In Synechococcus elongatus (strain ATCC 33912 / PCC 7942 / FACHB-805) (Anacystis nidulans R2), this protein is Magnesium-protoporphyrin IX monomethyl ester [oxidative] cyclase.